The following is a 390-amino-acid chain: Tuftelin (390 aa).

Coiled-coil stretches lie at residues 88–126 (DKMIHEKNINQLKSEVQYIQEARNCLQKLREDISSKLDR) and 162–351 (DTCI…IEKQ). Positions 358-390 (STQARAKTENPGSIRISKPPSPKPMPVIRVVET) are disordered.

It belongs to the tuftelin family. Interacts with TFIP11. In terms of tissue distribution, expressed in the epidermis (at protein level). Present in the extracellular enamel and is mainly associated with the crystal component.

Its subcellular location is the secreted. Its function is as follows. Involved in the structural organization of the epidermis. Involved in the mineralization and structural organization of enamel. This chain is Tuftelin (TUFT1), found in Homo sapiens (Human).